The following is a 532-amino-acid chain: IQ domain-containing protein IQM4 (532 aa).

Disordered regions lie at residues 47–67 (SRTNSFKSENPQEKSPKTGME) and 85–104 (PMNKEDEEIVEPTKPARNSL). A compositionally biased stretch (basic and acidic residues) spans 56-66 (NPQEKSPKTGM). A compositionally biased stretch (acidic residues) spans 85–94 (PMNKEDEEIV). Residues 136–165 (LDAAATTLQKVYKSYRTRRNLADCAVVVEE) enclose the IQ domain. 2 disordered regions span residues 410-443 (SSGYEEEATKEEEAEKKPAETIVTEEQEEEKERE) and 487-513 (PRISPGSTRFPSPYGPIPSPRPSPRVR). Polar residues predominate over residues 487–496 (PRISPGSTRF). Positions 499–509 (PYGPIPSPRPS) are enriched in pro residues.

Expressed in roots, cauline leaves and flowers, and at lower levels in rosette leaves, stems and siliques.

The protein localises to the cytoplasm. It localises to the nucleus. May be involved in biotic and abiotic stress responses. This Arabidopsis thaliana (Mouse-ear cress) protein is IQ domain-containing protein IQM4.